Consider the following 161-residue polypeptide: MTNGNGTPPEAAPPPQLNVLAQYTKDLSFENPNAPASLAPQPQQPAINIQINVGAKALAENEYEVTLSIEGKAEGASSLIFSFELQYAGVFRIVNVPQENLHPLVMIECPRLLFPFAREIIATAVRDGGFPPLMLDPVDFVGLYRQNMDRQAAEAQQASPN.

It belongs to the SecB family. In terms of assembly, homotetramer, a dimer of dimers. One homotetramer interacts with 1 SecA dimer.

The protein localises to the cytoplasm. One of the proteins required for the normal export of preproteins out of the cell cytoplasm. It is a molecular chaperone that binds to a subset of precursor proteins, maintaining them in a translocation-competent state. It also specifically binds to its receptor SecA. This is Protein-export protein SecB from Rhodopseudomonas palustris (strain BisA53).